A 462-amino-acid chain; its full sequence is ATP synthase subunit beta (462 aa).

151 to 158 (GGAGVGKT) lines the ATP pocket.

The protein belongs to the ATPase alpha/beta chains family. In terms of assembly, F-type ATPases have 2 components, CF(1) - the catalytic core - and CF(0) - the membrane proton channel. CF(1) has five subunits: alpha(3), beta(3), gamma(1), delta(1), epsilon(1). CF(0) has four main subunits: a(1), b(1), b'(1) and c(9-12).

Its subcellular location is the cell inner membrane. The catalysed reaction is ATP + H2O + 4 H(+)(in) = ADP + phosphate + 5 H(+)(out). Functionally, produces ATP from ADP in the presence of a proton gradient across the membrane. The catalytic sites are hosted primarily by the beta subunits. The polypeptide is ATP synthase subunit beta (Pelodictyon phaeoclathratiforme (strain DSM 5477 / BU-1)).